The following is a 258-amino-acid chain: Acidic leucine-rich nuclear phosphoprotein 32 family member E (258 aa).

N-acetylmethionine is present on Met-1. LRR repeat units lie at residues 18-38 (EVTE…EGLN), 43-64 (ELEF…PSLN), 65-87 (KLRK…AEKC), and 89-110 (NLTY…EALQ). Residue Lys-68 forms a Glycyl lysine isopeptide (Lys-Gly) (interchain with G-Cter in SUMO2) linkage. Residues 123–161 (CEITNLEDYRESIFELLQQITYLDGFDQEDNEAPDSEEE) form the LRRCT domain. Composition is skewed to acidic residues over residues 149-206 (DQED…EEEV) and 216-238 (IQDE…EEEE). The disordered stretch occupies residues 149 to 258 (DQEDNEAPDS…AEDDGEEDDD (110 aa)). The tract at residues 205–258 (EVGLSYLMKEEIQDEEDDDDYVDEGEEEEEEEEEGPRGEKRKRDAEDDGEEDDD) is ZID domain. Residues 239 to 249 (GPRGEKRKRDA) show a composition bias toward basic and acidic residues.

Belongs to the ANP32 family. In terms of assembly, component of a SWR1-like complex, composed of EP400, KAT5/TIP60, TRRAP, BRD8, RUVBL1, RUVBL2, ING3 and ANP32E; the complex does not contain SRCAP. Interacts with H2A.Z/H2AZ1. Interacts with the importin alpha KPNA1 and KPNA2. Phosphorylated. The phosphorylation is nuclear localization signal (NLS)-dependent.

It is found in the cytoplasm. The protein localises to the nucleus. Histone chaperone that specifically mediates the genome-wide removal of histone H2A.Z/H2AZ1 from the nucleosome: removes H2A.Z/H2AZ1 from its normal sites of deposition, especially from enhancer and insulator regions. Not involved in deposition of H2A.Z/H2AZ1 in the nucleosome. May stabilize the evicted H2A.Z/H2AZ1-H2B dimer, thus shifting the equilibrium towards dissociation and the off-chromatin state. Inhibits activity of protein phosphatase 2A (PP2A). Does not inhibit protein phosphatase 1. May play a role in cerebellar development and synaptogenesis. The chain is Acidic leucine-rich nuclear phosphoprotein 32 family member E (Anp32e) from Rattus norvegicus (Rat).